The primary structure comprises 482 residues: tRNA sulfurtransferase (482 aa).

A THUMP domain is found at 61 to 165; sequence LTIRDALTRI…DDRLLLIKGR (105 aa). Residues 183 to 184, Lys265, Gly287, and Gln296 contribute to the ATP site; that span reads LI. Cysteines 344 and 456 form a disulfide. The 79-residue stretch at 404–482 folds into the Rhodanese domain; that stretch reads CGPNDVILDI…GFNNVKVYRP (79 aa). The active-site Cysteine persulfide intermediate is Cys456.

This sequence belongs to the ThiI family.

It localises to the cytoplasm. It catalyses the reaction [ThiI sulfur-carrier protein]-S-sulfanyl-L-cysteine + a uridine in tRNA + 2 reduced [2Fe-2S]-[ferredoxin] + ATP + H(+) = [ThiI sulfur-carrier protein]-L-cysteine + a 4-thiouridine in tRNA + 2 oxidized [2Fe-2S]-[ferredoxin] + AMP + diphosphate. The enzyme catalyses [ThiS sulfur-carrier protein]-C-terminal Gly-Gly-AMP + S-sulfanyl-L-cysteinyl-[cysteine desulfurase] + AH2 = [ThiS sulfur-carrier protein]-C-terminal-Gly-aminoethanethioate + L-cysteinyl-[cysteine desulfurase] + A + AMP + 2 H(+). The protein operates within cofactor biosynthesis; thiamine diphosphate biosynthesis. In terms of biological role, catalyzes the ATP-dependent transfer of a sulfur to tRNA to produce 4-thiouridine in position 8 of tRNAs, which functions as a near-UV photosensor. Also catalyzes the transfer of sulfur to the sulfur carrier protein ThiS, forming ThiS-thiocarboxylate. This is a step in the synthesis of thiazole, in the thiamine biosynthesis pathway. The sulfur is donated as persulfide by IscS. In Shigella dysenteriae serotype 1 (strain Sd197), this protein is tRNA sulfurtransferase.